A 554-amino-acid chain; its full sequence is 3-(3-hydroxy-phenyl)propionate/3-hydroxycinnamic acid hydroxylase (554 aa).

FAD-binding positions include 17–46 and 285–295; these read QVAI…LVEK and FRIDRVLLAGD.

Belongs to the PheA/TfdB FAD monooxygenase family. FAD serves as cofactor.

It catalyses the reaction 3-(3-hydroxyphenyl)propanoate + NADH + O2 + H(+) = 3-(2,3-dihydroxyphenyl)propanoate + NAD(+) + H2O. The enzyme catalyses (2E)-3-(3-hydroxyphenyl)prop-2-enoate + NADH + O2 + H(+) = (2E)-3-(2,3-dihydroxyphenyl)prop-2-enoate + NAD(+) + H2O. It participates in aromatic compound metabolism; 3-phenylpropanoate degradation. Functionally, catalyzes the insertion of one atom of molecular oxygen into position 2 of the phenyl ring of 3-(3-hydroxyphenyl)propionate (3-HPP) and hydroxycinnamic acid (3HCI). The chain is 3-(3-hydroxy-phenyl)propionate/3-hydroxycinnamic acid hydroxylase from Klebsiella pneumoniae (strain 342).